We begin with the raw amino-acid sequence, 325 residues long: RNA ligase 1 (325 aa).

Mg(2+) is required as a cofactor. Requires Mn(2+) as cofactor. Post-translationally, AMPylates itself (auto-AMPylation).

The catalysed reaction is ATP + (ribonucleotide)n-3'-hydroxyl + 5'-phospho-(ribonucleotide)m = (ribonucleotide)n+m + AMP + diphosphate.. In terms of biological role, functions as an RNA ligase, in vitro. The ligation reaction entails three nucleotidyl transfer steps. In the first step, the RNA ligase reacts with ATP in the absence of nucleic acid to form a covalent ligase-AMP intermediate and release pyrophosphate. In step 2, the ligase-AMP binds to the nucleic acid and transfers the adenylate to the 5'-PO4 terminus to form an adenylylated intermediate. In step 3, the RNA ligase directs the attack of the 3'-OH on the 5'-phosphoanhydride linkage, resulting in a repaired 3'-5' phosphodiester and release of AMP. Exhibits selectivity for single-stranded RNA substrates and may not have nick-sealing activity on double-stranded DNA-RNA hybrids. May play a role in maintaining RNA integrity under stress conditions, for example in response to reactive oxygen species (ROS). The sequence is that of RNA ligase 1 from Pongo abelii (Sumatran orangutan).